We begin with the raw amino-acid sequence, 111 residues long: SPbeta prophage-derived uncharacterized protein YopW (111 aa).

The polypeptide is SPbeta prophage-derived uncharacterized protein YopW (yopW) (Bacillus subtilis (strain 168)).